The primary structure comprises 420 residues: L-rhamnose isomerase (420 aa).

Residues His-264, Asp-296, and Asp-298 each coordinate Mn(2+).

Belongs to the rhamnose isomerase family. The cofactor is Mn(2+).

The protein resides in the cytoplasm. The catalysed reaction is L-rhamnopyranose = L-rhamnulose. It functions in the pathway carbohydrate degradation; L-rhamnose degradation; glycerone phosphate from L-rhamnose: step 1/3. Catalyzes the interconversion of L-rhamnose and L-rhamnulose. This chain is L-rhamnose isomerase, found in Listeria monocytogenes serovar 1/2a (strain ATCC BAA-679 / EGD-e).